The following is a 342-amino-acid chain: MGYTAAVAGASGYVGGELLRLLLAHPDIEIGALTAGGNAGTRLGEHHPHLTPLADRILTETTPETLAGHDIVFLALPHGHSAALAAQLDADTLIVDCGADFRLADAAAWQKFYGSEHAGTWPYGLPELPGARAALAQTRRIAVPGCYPTCGTLALMPAFAEQLVEPEVVVVAASGTSGAGKAAKPHLIASEVMGSVSVYGVGGAHRHNPEFVQNLSAVAETPVRVSFTPVLVPMPRGILATCSAPLKPAIGLDEVRAAYQRHYDAEPFVHLLPEGQWPTTAMTLGANTAAVQVTVDEAAGRLVAVAAIDNLTKGTAGGAIQSANLALGLPETTGLPMTGVAP.

Cysteine 146 is a catalytic residue.

This sequence belongs to the NAGSA dehydrogenase family. Type 1 subfamily.

Its subcellular location is the cytoplasm. It carries out the reaction N-acetyl-L-glutamate 5-semialdehyde + phosphate + NADP(+) = N-acetyl-L-glutamyl 5-phosphate + NADPH + H(+). Its pathway is amino-acid biosynthesis; L-arginine biosynthesis; N(2)-acetyl-L-ornithine from L-glutamate: step 3/4. Functionally, catalyzes the NADPH-dependent reduction of N-acetyl-5-glutamyl phosphate to yield N-acetyl-L-glutamate 5-semialdehyde. This chain is N-acetyl-gamma-glutamyl-phosphate reductase, found in Thermobifida fusca (strain YX).